A 668-amino-acid chain; its full sequence is ATP-dependent RNA helicase MSS116, mitochondrial (668 aa).

The transit peptide at 1–38 (MLKQLSRSLGIRSSPIVANLIRSKQVCTRGFHISLVKQ) directs the protein to the mitochondrion. Residues 87–115 (DFKGKGYIHDSIINSLHKNDFKELTPIQQ) carry the Q motif motif. Residues 119 to 300 (VPIFNTEKGL…KKHIHPEYEF (182 aa)) enclose the Helicase ATP-binding domain. An ATP-binding site is contributed by 132–139 (AKTGTGKT). The DEAD box motif lies at 242–245 (DEAD). The Helicase C-terminal domain occupies 332 to 501 (SLSELHGIMK…NIIDQIESPL (170 aa)). The segment at 585 to 668 (YSDFSRSGMS…EHRRIRDHDE (84 aa)) is disordered. Over residues 586–597 (SDFSRSGMSQRP) the composition is skewed to polar residues. Over residues 609–636 (NGRGKYGNNRNNDWSYQNKNRYNNNNNR) the composition is skewed to low complexity. Residues 637 to 668 (QTERSYDSDRKSHNDWKYEKKFEHRRIRDHDE) show a composition bias toward basic and acidic residues.

Belongs to the DEAD box helicase family. DDX18/HAS1 subfamily.

The protein resides in the mitochondrion matrix. It catalyses the reaction ATP + H2O = ADP + phosphate + H(+). Functionally, ATP-dependent RNA helicase required for mitochondrial splicing of group I and II introns. Also required for efficient mitochondrial translation. The protein is ATP-dependent RNA helicase MSS116, mitochondrial (MSS116) of Candida albicans (strain SC5314 / ATCC MYA-2876) (Yeast).